The following is a 334-amino-acid chain: Methionyl-tRNA formyltransferase (334 aa).

Residue 111-114 participates in (6S)-5,6,7,8-tetrahydrofolate binding; the sequence is SILP.

Belongs to the Fmt family.

The catalysed reaction is L-methionyl-tRNA(fMet) + (6R)-10-formyltetrahydrofolate = N-formyl-L-methionyl-tRNA(fMet) + (6S)-5,6,7,8-tetrahydrofolate + H(+). Attaches a formyl group to the free amino group of methionyl-tRNA(fMet). The formyl group appears to play a dual role in the initiator identity of N-formylmethionyl-tRNA by promoting its recognition by IF2 and preventing the misappropriation of this tRNA by the elongation apparatus. This is Methionyl-tRNA formyltransferase from Trichormus variabilis (strain ATCC 29413 / PCC 7937) (Anabaena variabilis).